Consider the following 841-residue polypeptide: MPLRRFSPGLKAQFAFGMVFLFVQPDASAADISAQQIGGVIIPQAFSQALQDGMSVPLYIHLAGSQGRQDDQRIGSAFIWLDDGQLRIRKIQLEESEDNASVSEQTRQQLTTLANAPFNEALTIPLTDNAQLDLSLRQLLLQLVVKREALGTVLRSRSEDIGQSSVNTLSSNLSYNFGVYNNQLRNGGSNTSSYLSLNNVTALREHHVVLDGSLYGIGSGQQDSELYKAMYERDFAGHRFAGGMLDTWNLQSLGPMTAISAGKIYGLSWGNQASSTIFDSSQSATPVIAFLPAAGEVHLTRDGRLLSVQNFTMGNHEVDTRGLPYGIYDVEVEVIVNGRVISKRTQRVNKLFSRGRGVGAPLAWQIWGGSFHMDRWSENGKKTRPAKESWLAGASTSGSLSTFSWAATGYGYDNQAVGETRLTLPLGGAINVNLQNMLASDSSWSNIAGISATLPGGFSSLWVNQEKTRIGNQLRRSDADNRAIGGTLNLNSLWSKLGTFSISYNDDRRYNSHYYTADYYQSVYSGTFGSLGLRAGIQRYNNGDSSANTGKYIALDLSLPLGNWFSAGMTHQNGYTMANLSARKQFDEGTIRTVGANLSRAISGDTGDDKTLSGGAYAQFDARYASGTLNVNSAADGYINTNLTANGSVGWQGKNIAASGRTDGNAGVIFDTGLENDGQISAKINGRIFPLNGKRNYLPLSPYGRYEVELQNSKNSLDSYDIVSGRKSHLTLYPGNVAVIEPEVKQMVTVSGRIRAEDGTLLANARINNHIGRTRTDENGEFVMDVDKKYPTIDFRYSGNKTCEVALELNQARGAVWVGDVVCSGLSSWAAVTQTGEENES.

Positions 1–29 are cleaved as a signal peptide; that stretch reads MPLRRFSPGLKAQFAFGMVFLFVQPDASA.

This sequence belongs to the EcpC/MatD family.

Its function is as follows. Part of the ecpRABCDE operon, which encodes the E.coli common pilus (ECP). ECP is found in both commensal and pathogenic strains and plays a dual role in early-stage biofilm development and host cell recognition. This chain is Probable outer membrane usher protein EcpC (ecpC), found in Escherichia coli O6:H1 (strain CFT073 / ATCC 700928 / UPEC).